We begin with the raw amino-acid sequence, 617 residues long: MFSLSLIQPRLRISEIPVTQSYKSPTICYSSDSRTKREEQRHVRLPGFRLVSGKRASFDSGFSGFKGENVNQDDSSSFDSERVDYALLAEWLQSSNGMRLIKRIHAMALKCFDDQVIYFGNNLISSCVRLGDLVYARKVFDSMPEKNTVTWTAMIDGYLKYGLEDEAFALFEDYVKHGIRFTNERMFVCLLNLCSRRAEFELGRQVHGNMVKVGVGNLIVESSLVYFYAQCGELTSALRAFDMMEEKDVISWTAVISACSRKGHGIKAIGMFIGMLNHWFLPNEFTVCSILKACSEEKALRFGRQVHSLVVKRMIKTDVFVGTSLMDMYAKCGEISDCRKVFDGMSNRNTVTWTSIIAAHAREGFGEEAISLFRIMKRRHLIANNLTVVSILRACGSVGALLLGKELHAQIIKNSIEKNVYIGSTLVWLYCKCGESRDAFNVLQQLPSRDVVSWTAMISGCSSLGHESEALDFLKEMIQEGVEPNPFTYSSALKACANSESLLIGRSIHSIAKKNHALSNVFVGSALIHMYAKCGFVSEAFRVFDSMPEKNLVSWKAMIMGYARNGFCREALKLMYRMEAEGFEVDDYIFATILSTCGDIELDEAVESSATCYLETS.

Residues 1–19 (MFSLSLIQPRLRISEIPVT) constitute a chloroplast transit peptide. PPR repeat units follow at residues 116–146 (VIYF…MPEK), 147–181 (NTVT…GIRF), 183–217 (NERM…GVGN), 222–247 (SSLV…MEEK), 248–282 (DVIS…WFLP), 283–317 (NEFT…MIKT), 318–348 (DVFV…MSNR), 349–383 (NTVT…HLIA), 384–418 (NNLT…SIEK), 419–449 (NVYI…LPSR), 450–484 (DVVS…GVEP), 485–519 (NPFT…HALS), 520–550 (NVFV…MPEK), and 551–585 (NLVS…GFEV).

It belongs to the PPR family. PCMP-A subfamily. In terms of assembly, interacts with MORF8/RIP1, MORF2/RIP2 and MORF9/RIP9. As to expression, expressed specifically in aerial greening tissues, such as cotyledons, rosette leaves, cauline leaves, stems, sepals, stamens, carpels and siliques.

Its subcellular location is the plastid. It is found in the chloroplast. Required for proper chloroplast development. Involved in the regulation of plastid gene expression probably through regulation of plastid-encoded polymerase (PEP) dependent chloroplast transcription. Required for RNA editing of several chloroplastic transcripts, especially accD transcripts. Required for processing of the chloroplastic rpoA pre-mRNA. Required for the monocistronic rpoA transcript processing from the rpl23-rpl2-rps19-rpl22-rps3-rpl16-rpl14-rps8-rpl36-rps11-rpoA polycistron. Binds the intergenic sequence of rps11-rpoA for rpoA monocistronic RNA cleavage. The polypeptide is Pentatricopeptide repeat-containing protein At4g18520, chloroplastic (PCMP-A2) (Arabidopsis thaliana (Mouse-ear cress)).